Reading from the N-terminus, the 595-residue chain is Pectinesterase 5 (595 aa).

A signal peptide spans 1–24 (MIGKVVVSVASILLIVGVAIGVVA). N-linked (GlcNAc...) asparagine glycosylation is found at asparagine 86 and asparagine 206. Residues 215–239 (SDKGAAPVNKGTPPVADDSPVADPD) are disordered. Residues 227–239 (PPVADDSPVADPD) are compositionally biased toward low complexity. The RRLL cleavage motif motif lies at 243–246 (RRLL). Positions 263–266 (RKLM) match the RKLM cleavage motif motif. The N-linked (GlcNAc...) asparagine glycan is linked to asparagine 349. Residues threonine 360 and glutamine 390 each coordinate substrate. Aspartate 413 serves as the catalytic Proton donor. Residue aspartate 434 is the Nucleophile of the active site. The substrate site is built by arginine 503 and tryptophan 505.

In the N-terminal section; belongs to the PMEI family. This sequence in the C-terminal section; belongs to the pectinesterase family. Interacts with SBT6.1. Expressed in pollen grains and pollen tubes.

It localises to the cell membrane. The protein resides in the secreted. Its subcellular location is the cell wall. It is found in the golgi apparatus membrane. It catalyses the reaction [(1-&gt;4)-alpha-D-galacturonosyl methyl ester](n) + n H2O = [(1-&gt;4)-alpha-D-galacturonosyl](n) + n methanol + n H(+). It participates in glycan metabolism; pectin degradation; 2-dehydro-3-deoxy-D-gluconate from pectin: step 1/5. Functionally, acts in the modification of cell walls via demethylesterification of cell wall pectin. Plays an important role in growth of pollen tubes in female floral tissues, possibly via enhancing the interaction between the pollen tube and female floral tissues by modification of the cell walls. May be regulated by MYB80 during anther development and play a role in tapetum and pollen development. The sequence is that of Pectinesterase 5 (PME5) from Arabidopsis thaliana (Mouse-ear cress).